The sequence spans 505 residues: 2,3-bisphosphoglycerate-independent phosphoglycerate mutase (505 aa).

The Mn(2+) site is built by aspartate 11 and serine 61. Serine 61 functions as the Phosphoserine intermediate in the catalytic mechanism. Residues histidine 122, 152 to 153, arginine 184, arginine 190, 258 to 261, and lysine 331 contribute to the substrate site; these read RD and RPDR. Aspartate 396, histidine 400, aspartate 437, histidine 438, and histidine 455 together coordinate Mn(2+).

The protein belongs to the BPG-independent phosphoglycerate mutase family. As to quaternary structure, monomer. Mn(2+) serves as cofactor.

The catalysed reaction is (2R)-2-phosphoglycerate = (2R)-3-phosphoglycerate. The protein operates within carbohydrate degradation; glycolysis; pyruvate from D-glyceraldehyde 3-phosphate: step 3/5. Catalyzes the interconversion of 2-phosphoglycerate and 3-phosphoglycerate. The polypeptide is 2,3-bisphosphoglycerate-independent phosphoglycerate mutase (Mesomycoplasma hyopneumoniae (strain J / ATCC 25934 / NCTC 10110) (Mycoplasma hyopneumoniae)).